The primary structure comprises 1116 residues: Protein STICHEL-like 1 (1116 aa).

2 disordered regions span residues 95 to 138 (RTSS…LEET) and 225 to 244 (KFLR…NSTP). Acidic residues predominate over residues 115-124 (NDDDDDDDDV). 2 consecutive short sequence motifs (PEST) follow at residues 257 to 282 (RNPS…FKGR) and 402 to 422 (KSQD…ESIQ). 463 to 470 (GPRGTGKT) serves as a coordination point for ATP. Zn(2+)-binding residues include C482, C492, C495, and C498. A coiled-coil region spans residues 726–760 (EAFLDRRNLTEADLERLKHALKLLSEAEKQLRVST). A disordered region spans residues 777-798 (PSPGTTHTGSSRRQSSRATEES). Residues 778-793 (SPGTTHTGSSRRQSSR) show a composition bias toward polar residues.

The protein belongs to the DnaX/STICHEL family.

This chain is Protein STICHEL-like 1, found in Arabidopsis thaliana (Mouse-ear cress).